The chain runs to 629 residues: Polyadenylate-binding protein 2 (629 aa).

A compositionally biased stretch (polar residues) spans methionine 1–asparagine 12. A disordered region spans residues methionine 1–serine 25. Residues glycine 13–serine 25 show a composition bias toward low complexity. 4 RRM domains span residues threonine 36–arginine 114, glycine 124–arginine 201, threonine 215–lysine 292, and serine 318–arginine 395. The disordered stretch occupies residues proline 480 to glutamine 507. Positions glycine 492 to glutamine 507 are enriched in low complexity. The PABC domain occupies threonine 539–alanine 616.

It belongs to the polyadenylate-binding protein type-1 family. In terms of assembly, interacts with eIF-iso4G. Interacts with ERD15/CID1 and CID7. Interacts with Turnip mosaic virus (TuMV) VPg-Pro and RNA-dependent RNA polymerase (RdRp). As to expression, expressed in all organs (at the protein level) but under distinct spatial and temporal regulation within each organ.

It is found in the cytoplasm. The protein resides in the nucleus. Functionally, binds the poly(A) tail of mRNA. Appears to be an important mediator of the multiple roles of the poly(A) tail in mRNA biogenesis, stability and translation. In the cytoplasm, affects both translation and mRNA decay. Stimulates translation by interaction with translation initiation factor eIF4G, a subunit of the cap-binding complex eIF4F, bringing the 5'- and 3'-ends of the mRNA in proximity. The formation of this circular mRNP structure appears to be critical for the synergistic effects of the cap and the poly(A) tail in facilitating translation initiation, recycling of ribosomes, and mRNA stability. During infection with potyvirus TuMV, acts as a potential integral component of the viral replicase complex that could play an important role in the regulation of potyviral RNA-dependent RNA polymerase (RdRp). Binds to uridylated mRNAs and determines the size of uridine extensions. Limits uridine extension by URT1, likely by binding to the oligo(A) tail and preventing URT1 access. The chain is Polyadenylate-binding protein 2 (PAB2) from Arabidopsis thaliana (Mouse-ear cress).